Here is a 459-residue protein sequence, read N- to C-terminus: ATP-dependent RNA helicase me31b (459 aa).

Residues Met1–Leu267 are recA-like domain 1. Ser8 and Ser29 each carry phosphoserine. Residues Asn58–Glu86 carry the Q motif motif. A Helicase ATP-binding domain is found at Ile89 to Ile259. Ala102–Thr109 contacts ATP. The DEAD box motif lies at Asp207–Asp210. The tract at residues Glu264–Val431 is gyf binding. Residues Gly269–Leu429 enclose the Helicase C-terminal domain. The segment at Ala432–Lys459 is recA-like domain 2. Position 450 is a phosphoserine (Ser450).

Belongs to the DEAD box helicase family. DDX6/DHH1 subfamily. Conserved component of different types of multiprotein ribonucleoprotein complexes (RNPs) that form distinct germ granules (P-body, nuage, sponge body or polar granules) and P-body-like neuronal RNPs. Consequently it interacts with a wide variety of proteins, some of which appear to be common interactive partners in almost all RNPs types i.e. cup and tral, whereas other interactions are specific to a germ granule/RNP. Core functional components in me31B-containing RNPs include RNA regulatory proteins (such as translational repressor, RNA-decapping and exonuclease proteins), RNA localization proteins and additional proteins depending on the biological context of the RNPs. In the P-body RNPs, interacts with at least the translation repressor proteins tral, cup and Edc3, and the mRNA localization factor yps. Interaction with tral or Edc3 is required for translation repression and possibly RNA decapping; binding to tral and Edc3 is mutually exclusive. In the nuage and germ plasm polar granule RNPs, interacts with at least tral, cup, and additional proteins required for assembly and function of the germ granules such as tud, vas and aub. Interacts (when dimethylated on Arg residues) with tud; interaction is RNA-independent. Component of the osk RNP complex, which is composed of at least me31B, exu, yps, aret/bruno, cup, and the mRNA of osk. Component of the nanos RNP complex, which is composed of at least smg, cup, tral, me31B, the CCR4-NOT complex members Rga/NOT2 and Caf1-55, and the mRNA of nanos (nos). Interacts with tral and piRNA pathway components papi and AGO3; promotes interaction between nuage RNPs and the piRNA-mediated transposon silencing. Forms a RNP containing at least me31B, eIF4E1, cup, tral and pAbp; this interaction is required for the translational silencing of maternal mRNAs during the maternal-to-zygotic transition. In the sponge body, forms a RNP containing at least me31B, exu, yps and the mRNA of osk; interactions with exu and yps are RNA dependent. Component of a neuronal RNP, at least composed of me31B, tral and Fmr1. Component of the Atx2-Not1 repressor complex, composed of at least me31B, Atx2, tyf and pAbp. Interacts (via the C-terminus) with Atx2, tyf, pAbp and Lsm12a. Interacts (via RecA-like domain 2) with 4EHP-GYF2 complex member Gyf (via the me31B binding motif). Interacts with 4E-T, Edc3 and Patr-1. In terms of processing, symmetrically dimethylated on arginine residues. In terms of tissue distribution, ubiquitously expressed throughout the brain (at protein level). Expressed in the olfactory system including the antennal lobes, projection neurons, local interneurons, mushroom-body Kenyon cells and glial cells (at protein level).

The protein localises to the cytoplasm. Its subcellular location is the cytoplasmic ribonucleoprotein granule. The protein resides in the P-body. It localises to the endoplasmic reticulum. It is found in the cell projection. The protein localises to the dendrite. The catalysed reaction is ATP + H2O = ADP + phosphate + H(+). Functionally, ATP-dependent RNA helicase which is a core component of a variety of ribonucleoprotein complexes (RNPs) that play critical roles in translational repression and mRNA decapping during embryogenesis, oogenesis, neurogenesis and neurotransmission. Recruits core components and translational repressors to some RNP complexes, and mediates RNP aggregation into processing granules such as P-bodies. As part of a RNP complex containing tral, eIF4E1, cup, and pAbp, involved in RNP-mediated translational repression of maternal mRNAs during oogenesis and embryogenesis. As part of a RNP complex containing tral and the RNA localization factors exu and yps, mediates translational silencing of mRNAs such as osk/oskar and bcd/bicoid during their transport to the oocyte in order to prevent their translation until they reach their positional destinations. In neurons and possibly imaginal disks, involved in miRNA-mediated translational repression, possibly in association with components of the piRNA transposon silencing pathway. Involved in RNA localization and protein trafficking in the oocyte. As part of an ER-associated RNP containing tral, cup and yps, required for tral-dependent ER exit site formation and consequently efficient trafficking of proteins such as grk and yl through the secretory pathway. Component of neuron RNPs that mediate transport and translation of neuronal RNAs, including translation repression of synaptic transcripts in preparation for their dendritic targeting. As part of the Atx2-Not1 repressor complex promotes Not1-dependent post-transcriptional gene silencing in adult circadian pacemaker neurons in order to sustain high-amplitude circadian rhythms and Pdf cycling in a per-independent manner. Promotes the interaction between Atx2 and Not1 within the Atx2-Not1 RNP complex. Recruited to the 4EHP-GYF2 complex by Gyf, where it plays a role in 4EHP-GYF2 mediated translational repression and mRNA decay. The chain is ATP-dependent RNA helicase me31b (me31B) from Drosophila melanogaster (Fruit fly).